The sequence spans 964 residues: Translation initiation factor IF-2 (964 aa).

The span at 1-10 (MSDKTNDDKT) shows a compositional bias: basic and acidic residues. A disordered region spans residues 1-379 (MSDKTNDDKT…SQMQETREKI (379 aa)). Over residues 27–37 (EQSTVRQNFSH) the composition is skewed to polar residues. Residues 77 to 102 (APAASTPAPAQAAQPAQAAPVVRAPA) show a composition bias toward low complexity. The span at 103-113 (PATPAPKPAAP) shows a compositional bias: pro residues. Over residues 114–140 (AAPVTKPHVAQQRPAQQRPGGQQAQRP) the composition is skewed to low complexity. 2 stretches are compositionally biased toward basic and acidic residues: residues 156 to 227 (SEMD…EAAK) and 234 to 243 (ARTERRDDAR). Low complexity predominate over residues 250 to 278 (RPQQAGRPQGNRPPQGGRPQQGGPRPAAP). Residues 323–338 (PEVRAPKVVKTEDDRR) show a composition bias toward basic and acidic residues. The region spanning 462-629 (SRPPVVTIMG…AILLQAEILD (168 aa)) is the tr-type G domain. The segment at 471–478 (GHVDHGKT) is G1. Residue 471-478 (GHVDHGKT) coordinates GTP. Positions 496 to 500 (GITQH) are G2. Residues 517–520 (DTPG) are G3. GTP is bound by residues 517-521 (DTPGH) and 571-574 (NKID). Positions 571 to 574 (NKID) are G4. The interval 607 to 609 (SAK) is G5.

The protein belongs to the TRAFAC class translation factor GTPase superfamily. Classic translation factor GTPase family. IF-2 subfamily.

The protein resides in the cytoplasm. Its function is as follows. One of the essential components for the initiation of protein synthesis. Protects formylmethionyl-tRNA from spontaneous hydrolysis and promotes its binding to the 30S ribosomal subunits. Also involved in the hydrolysis of GTP during the formation of the 70S ribosomal complex. The protein is Translation initiation factor IF-2 of Brucella anthropi (strain ATCC 49188 / DSM 6882 / CCUG 24695 / JCM 21032 / LMG 3331 / NBRC 15819 / NCTC 12168 / Alc 37) (Ochrobactrum anthropi).